The chain runs to 808 residues: DNA ligase (808 aa).

A disordered region spans residues 1 to 30; sequence MSISDDISPVPPAPVSEPNAGQDAGQDAAP. The segment covering 18 to 30 has biased composition (low complexity); it reads PNAGQDAGQDAAP. Residues 61–65, 110–111, and D141 each bind NAD(+); these read DAEYD and SL. The active-site N6-AMP-lysine intermediate is K143. Residues R164, E202, K334, and K358 each contribute to the NAD(+) site. Zn(2+) contacts are provided by C453, C456, C471, and C476. The region spanning 644–733 is the BRCT domain; that stretch reads EGSGPLAGLR…GGDVPEDGDG (90 aa). The tract at residues 720 to 808 is disordered; the sequence is LEGRGGDVPE…PRKKDQHSLL (89 aa). A compositionally biased stretch (acidic residues) spans 727 to 742; sequence VPEDGDGAPGNEDEAP. The span at 746 to 773 shows a compositional bias: low complexity; the sequence is ADVPAAPEVLADAPAAISADASSGVAPG. The segment covering 779-792 has biased composition (basic and acidic residues); that stretch reads DRADMTDRTVRTDS.

It belongs to the NAD-dependent DNA ligase family. LigA subfamily. Mg(2+) serves as cofactor. It depends on Mn(2+) as a cofactor.

The catalysed reaction is NAD(+) + (deoxyribonucleotide)n-3'-hydroxyl + 5'-phospho-(deoxyribonucleotide)m = (deoxyribonucleotide)n+m + AMP + beta-nicotinamide D-nucleotide.. In terms of biological role, DNA ligase that catalyzes the formation of phosphodiester linkages between 5'-phosphoryl and 3'-hydroxyl groups in double-stranded DNA using NAD as a coenzyme and as the energy source for the reaction. It is essential for DNA replication and repair of damaged DNA. The polypeptide is DNA ligase (Nitratidesulfovibrio vulgaris (strain DSM 19637 / Miyazaki F) (Desulfovibrio vulgaris)).